The following is a 175-amino-acid chain: Universal stress protein A-like protein (175 aa).

Positions 11, 12, 13, 26, 27, 53, 131, 133, 145, 146, and 147 each coordinate AMP.

This sequence belongs to the universal stress protein A family. As to quaternary structure, homohexamer.

The chain is Universal stress protein A-like protein from Arabidopsis thaliana (Mouse-ear cress).